Consider the following 93-residue polypeptide: Consomatin G2 (93 aa).

The signal sequence occupies residues 1-18 (MQTAYWVMLMMMVCITAP). Residues 19 to 69 (LPEGGKPNSGIRGLVPNDLTPQHTLRSLISRRQTDVLLDATLLTTPAPEQR) constitute a propeptide that is removed on maturation. Cys72 and Cys77 are disulfide-bonded. D-tryptophan is present on Trp74. Positions 79–93 (WRPYPWRRRDLNGKR) are excised as a propeptide.

The protein belongs to the conotoxin C superfamily. Consomatin family. As to expression, expressed by the venom duct.

The protein localises to the secreted. Its function is as follows. Moderately activates human somatostatin receptors (SSTR) with a preferential activation of SSTR1 and SSTR4. In vivo, does not cause behavioral changes in mice within a few minutes of intracranial injection, but causes a progressive loss of movement thereafter. Four to five hours after injection, mice recover, even with the highest dose tested. Shows antinociception and antihyperalgesia activities in two mouse models of acute pain, most probably by acting outside the central nervous system. In Conus geographus (Geography cone), this protein is Consomatin G2.